The following is a 131-amino-acid chain: Small ribosomal subunit protein uS11 (131 aa).

Belongs to the universal ribosomal protein uS11 family. As to quaternary structure, part of the 30S ribosomal subunit. Interacts with proteins S7 and S18. Binds to IF-3.

Functionally, located on the platform of the 30S subunit, it bridges several disparate RNA helices of the 16S rRNA. Forms part of the Shine-Dalgarno cleft in the 70S ribosome. The chain is Small ribosomal subunit protein uS11 from Paramagnetospirillum magneticum (strain ATCC 700264 / AMB-1) (Magnetospirillum magneticum).